Reading from the N-terminus, the 175-residue chain is Lactobacillus up-regulated protein (175 aa).

The N-terminal stretch at M1–A18 is a signal peptide. N-linked (GlcNAc...) asparagine glycosylation is present at N59.

The protein is Lactobacillus up-regulated protein (lbuA) of Emericella nidulans (strain FGSC A4 / ATCC 38163 / CBS 112.46 / NRRL 194 / M139) (Aspergillus nidulans).